A 92-amino-acid polypeptide reads, in one-letter code: LYR motif-containing protein 4 homolog (92 aa).

Positions 48 to 68 (AEIDRQMAEGQQNLELIRRQV) form a coiled coil.

The protein belongs to the complex I LYR family. Component of the mitochondrial core iron-sulfur cluster (ISC) assembly complex at least composed of the cysteine desulfurase Nfs1, the scaffold protein IscU, the accessory protein bcn92/Isd11/Lyrm4, and probably fh/frataxin. Interacts with Nfs1.

Its subcellular location is the mitochondrion. Its function is as follows. Stabilizing factor of the core iron-sulfur cluster (ISC) assembly complex that regulates the stability and cysteine desulfurase activity of Nfs1 and participates in the [2Fe-2S] clusters assembly on the scaffolding protein IscU. The protein is LYR motif-containing protein 4 homolog of Drosophila melanogaster (Fruit fly).